The primary structure comprises 453 residues: 5-hydroxytryptamine receptor 1 (453 aa).

Topologically, residues 1 to 36 (MKSLKSSTHDVPHPEHVVWAPPAYDEQHHLFFSHGT) are extracellular. The helical transmembrane segment at 37–57 (VLIGIVGSLIITVAVVGNVLV) threads the bilayer. At 58–74 (CLAIFTEPILSHSKSNF) the chain is on the cytoplasmic side. The chain crosses the membrane as a helical span at residues 75–94 (FIVSLAVADLLLALLVMTFA). Topologically, residues 95 to 110 (LVNDMYGYWLFGETFC) are extracellular. Cysteines 110 and 225 form a disulfide. The helical transmembrane segment at 111–133 (FIWMSADVMCETASIFSICVISY) threads the bilayer. Topologically, residues 134-153 (DRLKQVQKPLHYEEFMTTTR) are cytoplasmic. The chain crosses the membrane as a helical span at residues 154–175 (ALLIIACLWICSFVLSFVPIFL). At 176-223 (EWHELSVEEIKAIFKDNKTEKEKALEAHNFSSALNQTLGDNQKSNAKH) the chain is on the extracellular side. A helical transmembrane segment spans residues 224–244 (VCLFDVHFTYSVIYSFICFYV). Topologically, residues 245–301 (PCTLMLTNYLRLFLIAQTHQVRIRSLQMTNPPQLRGQGASSYRNQGTQGSKAARTLT) are cytoplasmic. Residues 302–322 (IITGTFLACWLPFFIINPIAA) traverse the membrane as a helical segment. Residues 323–331 (ADEHLIPLE) lie on the Extracellular side of the membrane. A helical transmembrane segment spans residues 332–352 (CFMVTIWLGYFNSSVNPIIYG). Over 353–453 (TSNSKFRAAF…VFDSDTAFSS (101 aa)) the chain is Cytoplasmic. A disordered region spans residues 397–428 (DLSSSEHPSDACDTGRGKNSKGGDCATADPTK). Residues 403–412 (HPSDACDTGR) are compositionally biased toward basic and acidic residues.

The protein belongs to the G-protein coupled receptor 1 family. As to expression, reproductive system.

It is found in the cell membrane. This is one of the several different receptors for 5-hydroxytryptamine (serotonin). 5-HT plays important roles in various behavioral and physiological processes in aplysia. These include feeding, locomotion, circadian rhythm, learning and memory, synaptic plasticity, and synaptic growth. This receptor is mediated by G proteins that stimulate phospholipase C. The chain is 5-hydroxytryptamine receptor 1 (5HTB1) from Aplysia californica (California sea hare).